A 354-amino-acid chain; its full sequence is DNA polymerase IV (354 aa).

Positions 6–187 (IIHIDCDCFY…LPVTKLHGVG (182 aa)) constitute a UmuC domain. Mg(2+) is bound by residues Asp10 and Asp105. Residue Glu106 is part of the active site.

This sequence belongs to the DNA polymerase type-Y family. In terms of assembly, monomer. Mg(2+) is required as a cofactor.

The protein resides in the cytoplasm. It catalyses the reaction DNA(n) + a 2'-deoxyribonucleoside 5'-triphosphate = DNA(n+1) + diphosphate. Its function is as follows. Poorly processive, error-prone DNA polymerase involved in untargeted mutagenesis. Copies undamaged DNA at stalled replication forks, which arise in vivo from mismatched or misaligned primer ends. These misaligned primers can be extended by PolIV. Exhibits no 3'-5' exonuclease (proofreading) activity. May be involved in translesional synthesis, in conjunction with the beta clamp from PolIII. This Pseudomonas syringae pv. syringae (strain B728a) protein is DNA polymerase IV.